The chain runs to 298 residues: Nucleotide-binding protein GTNG_3015 (298 aa).

ATP is bound at residue 17-24; sequence GMSGAGKT. Residue 68–71 participates in GTP binding; the sequence is DLRS.

This sequence belongs to the RapZ-like family.

In terms of biological role, displays ATPase and GTPase activities. This is Nucleotide-binding protein GTNG_3015 from Geobacillus thermodenitrificans (strain NG80-2).